The chain runs to 612 residues: Chaperone protein DnaK (612 aa).

Phosphothreonine; by autocatalysis is present on Thr174. The segment at 579-612 is disordered; sequence GSAGTGAGSQAGSAAGSGDGQSMDAEFKVKDEDK. The span at 581 to 597 shows a compositional bias: gly residues; it reads AGTGAGSQAGSAAGSGD. Over residues 603-612 the composition is skewed to basic and acidic residues; it reads AEFKVKDEDK.

The protein belongs to the heat shock protein 70 family.

Acts as a chaperone. The protein is Chaperone protein DnaK of Symbiobacterium thermophilum (strain DSM 24528 / JCM 14929 / IAM 14863 / T).